Here is a 248-residue protein sequence, read N- to C-terminus: MVKLAFGSFRDSLSAASLKAYVAEFIATLLFVFAGVGSAIAYSQLTKGGALDPAGLVAIAIAHAFALFVGVSMAANISGGHLNPAVTFGLAVGGHITILTGILYWVAQLLGASVACFLLQYVTHGQAIPTHGVSGISEIEGVVMEIVITFALVYTVYATAADPKKGSLGTIAPMAIGFIVGANILAAGPFSGGSMNPARSFGPAVAAGNFAGNWVYWVGPLVGGGLAGLVYGDVFIASYQPVGQQEYP.

2 helical membrane passes run 20–40 (AYVA…GSAI) and 54–74 (AGLV…VSMA). The NPA 1 signature appears at 83–85 (NPA). 3 consecutive transmembrane segments (helical) span residues 97-119 (TILT…CFLL), 141-161 (GVVM…ATAA), and 168-188 (LGTI…LAAG). Residues 196 to 198 (NPA) carry the NPA 2 motif. The chain crosses the membrane as a helical span at residues 217–237 (WVGPLVGGGLAGLVYGDVFIA).

Belongs to the MIP/aquaporin (TC 1.A.8) family. TIP (TC 1.A.8.10) subfamily. In terms of tissue distribution, specifically expressed in roots.

It is found in the cell membrane. Functionally, water channel required to facilitate the transport of water across cell membrane. This Zea mays (Maize) protein is Aquaporin TIP2-3 (TIP2-3).